The primary structure comprises 932 residues: Protein hir1 (932 aa).

WD repeat units follow at residues 16 to 55 (GHRL…RENE), 72 to 111 (THTG…PGLG), 132 to 171 (GHDN…RLKR), 174 to 213 (AHQS…IEKT), 222 to 265 (PLST…SEIN), 268 to 316 (GHEG…PLLS), and 320 to 361 (VFQK…DMVS). Composition is skewed to polar residues over residues 405–426 (STTD…QKTP) and 441–453 (TVDT…SKEQ). Disordered stretches follow at residues 405-470 (STTD…NEIP) and 498-520 (TPST…LPPQ). The segment covering 498–507 (TPSTSRLAST) has biased composition (low complexity).

This sequence belongs to the WD repeat HIR1 family. In terms of assembly, interacts with his3 and slm9.

It localises to the cytoplasm. The protein resides in the nucleus. Its function is as follows. Probably required for replication-independent chromatin assembly. Required for transcriptional silencing in the outer repeat (otr) centromeric repeats and the Tf2 long terminal repeat retrotransposons. Repressor of histone gene transcription in G1 arrested cells. Required for repression of htb1 gene expression outside of S phase. The polypeptide is Protein hir1 (hip1) (Schizosaccharomyces pombe (strain 972 / ATCC 24843) (Fission yeast)).